A 430-amino-acid polypeptide reads, in one-letter code: RPM1 interacting protein 13 (430 aa).

The segment at 1 to 21 (MGSGNHVDIVDVSSGEEDVDT) is disordered. A nuclear localization region spans residues 231–300 (RHRIRQPIPH…QVSQSSHHSS (70 aa)).

Interacts with RPM1 (via its NB-ARC domain). Binds to ARF1 in the nucleus.

The protein resides in the nucleus. In terms of biological role, resistance protein interactor which positively enhances RPM1-mediated resistance to necrotrophic bacterial pathogens Pseudomonas syringae pv. tomato DC3000 harboring type III effector protein AvrRpm1 or AvrB, but prevents the hypersensitive response (HR) controlled by RPM1. Together with ARF1, promotes leaf senescence and cell death, probably by facilitating the translocation of ARF1 into the nucleus, and activates ROS-related enzymes (e.g. POD, CAT and SOD). This is RPM1 interacting protein 13 from Arabidopsis thaliana (Mouse-ear cress).